Here is a 518-residue protein sequence, read N- to C-terminus: D-aminopeptidase (518 aa).

Ser-62 serves as the catalytic Nucleophile. Residue Lys-65 is the Proton donor/acceptor of the active site. The important for specificity stretch occupies residues 477-487 (QRSMDAPSPGE). Residue Asp-481 participates in substrate binding.

The protein belongs to the peptidase S12 family. As to quaternary structure, homodimer.

The catalysed reaction is Release of an N-terminal D-amino acid from a peptide, Xaa-|-Yaa-, in which Xaa is preferably D-Ala, D-Ser or D-Thr. D-amino acid amides and methyl esters also are hydrolyzed, as is glycine amide.. Its activity is regulated as follows. Inhibited by beta-lactam compounds such as 6-aminopenicillic acid, 7-aminocephalosporanic acid, benzylpenicillin and ampicillin. Inhibited by p-chloromercuribenzoate. Functionally, hydrolyzes N-terminal residues in D-amino acid-containing peptides. The sequence is that of D-aminopeptidase from Brucella abortus (strain S19).